We begin with the raw amino-acid sequence, 252 residues long: Phosphate import ATP-binding protein PstB 1 (252 aa).

Residues 6 to 247 (LKVNDLSVYY…PQKQETEDYI (242 aa)) form the ABC transporter domain. Residue 38-45 (GPSGSGKS) participates in ATP binding.

Belongs to the ABC transporter superfamily. Phosphate importer (TC 3.A.1.7) family. In terms of assembly, the complex is composed of two ATP-binding proteins (PstB), two transmembrane proteins (PstC and PstA) and a solute-binding protein (PstS).

The protein localises to the cell membrane. The enzyme catalyses phosphate(out) + ATP + H2O = ADP + 2 phosphate(in) + H(+). Its function is as follows. Part of the ABC transporter complex PstSACB involved in phosphate import. Responsible for energy coupling to the transport system. This Streptococcus mutans serotype c (strain ATCC 700610 / UA159) protein is Phosphate import ATP-binding protein PstB 1.